The primary structure comprises 303 residues: Major fimbrium anchoring subunit FimB (303 aa).

A signal peptide spans 1–22 (MNDAKKYIVSVLILLVAGMFGG). C23 carries N-palmitoyl cysteine lipidation. The S-diacylglycerol cysteine moiety is linked to residue C23.

It belongs to the bacteroidetes fimbrillin superfamily. FimB/Mfa2 family. FimB is not part of the fimbrium itself, but anchors the fimbrium in the outer membrane. Linear, head-to-tail oligomerization of fimbrial subunits mediates assembly of the fimbrium stalk, while the minor components FimC, FimD and FimE probably form the fimbrium tip. The anchoring subunit FimB limits fimbrium length and is important for solid fimbrium attachment to the outer membrane. In its absence, the major fimbriae become very long and are easily detached from the membrane.

It is found in the cell outer membrane. Anchoring subunit of the major fimbriae. Regulates fimbrial length. These filamentous pili are attached to the cell surface; they mediate biofilm formation, adhesion onto host cells and onto other bacteria that are part of the oral microbiome. Fimbriae of P.gingivalis are major virulence factors. The polypeptide is Major fimbrium anchoring subunit FimB (Porphyromonas gingivalis (strain ATCC 33277 / DSM 20709 / CIP 103683 / JCM 12257 / NCTC 11834 / 2561)).